A 146-amino-acid polypeptide reads, in one-letter code: Phospho-2-dehydro-3-deoxyheptonate aldolase (146 aa).

It belongs to the class-II DAHP synthase family. As to quaternary structure, homodimer.

The enzyme catalyses D-erythrose 4-phosphate + phosphoenolpyruvate + H2O = 7-phospho-2-dehydro-3-deoxy-D-arabino-heptonate + phosphate. It participates in metabolic intermediate biosynthesis; chorismate biosynthesis; chorismate from D-erythrose 4-phosphate and phosphoenolpyruvate: step 1/7. This Streptomyces lividans protein is Phospho-2-dehydro-3-deoxyheptonate aldolase.